The chain runs to 267 residues: PF03932 family protein CutC (267 aa).

This sequence belongs to the CutC family.

Its subcellular location is the cytoplasm. This Xylella fastidiosa (strain Temecula1 / ATCC 700964) protein is PF03932 family protein CutC.